The primary structure comprises 847 residues: MKLLKLPSKLHDGQLTQCEVDDNKLYIIGGKYLSIWDSQTLLNAATGKTDVKEVKELEKMSLDLLESNQEDGRWLVVLDNQRLVYGSDHLLACLDLNKDSNSEYKSREIGIFKDNEAITDLKYDKVNGLLFVSLSKANSLQIMDSKTWELKSSIELKSKPISIITDPLGQLLTVILQNRSVQIYQYDSHGTTKLHQSINQFVQTNPLPYRMTMSPQGDVIPMINSLHNNVPTAVLLDRIQKFKIKLSLVGYVADCKILKFSPRIYSKTKSPTSNDTQTFNLLASSGNEDGNVVVWNTNRIKPLFDASKVVNSYITDLEWDNSGLGLFAISQDGQLVIFAFQENELGDVMPVEAVTEAAKEIKLLDPLPFKPKAEEPDTKLPPNKTAQQTTTNSKKQPKAAEITTISSTNMEFIQPSYMVPKDLKRKPVTEDPLLAQNKPANKKAKKELDQIDFLDTNLFLPSVSFSKVRLAHPKIRASFQYSSQGNFVLDIKNGLGNDQKPTSITLTRKDNESSKQLFQTFLPKFVTLCSAGSSFWAWSTDTGMIYVTSISGQMLFPPMLLGVPVSFLEGSGDYLLCITSIGQMYCWNVNTGKIAFPINDVYSLLNPMLRYSDDVLSRAENITMCAVTSQGIPIVTLSNGDGYMFDSAMEAWMLINDSWWPYGSQYWNFMSSAGVDLTSNDDEKKDKYWNAEADILAKEVKNNKNSIINYLETKTNDELTRKGRMKHLQRFAKVLLMKEGFENLEEMITLAHLENKILVSFRLKEVEEAIRLLKIYCIRIAEMGYTDRFSQTLSWLYDPTNTKFSPLDIDRRRNLIKDIIISCANIRQVQRVTTSYANELGVISDSL.

WD repeat units lie at residues 10–46, 113–153, 155–194, 259–305, and 309–348; these read LHDG…NAAT, KDNE…LKSS, ELKS…TTKL, KFSP…PLFD, and VVNS…LGDV. The tract at residues 368-399 is disordered; that stretch reads PFKPKAEEPDTKLPPNKTAQQTTTNSKKQPKA. Polar residues predominate over residues 384-394; the sequence is KTAQQTTTNSK. WD repeat units follow at residues 508 to 548 and 558 to 597; these read RKDN…IYVT and PMLL…IAFP.

This sequence belongs to the WD repeat HIR1 family.

The protein localises to the nucleus. Required for replication-independent chromatin assembly and for the periodic repression of histone gene transcription during the cell cycle. The chain is Protein HIR2 (HIR2) from Kluyveromyces lactis (strain ATCC 8585 / CBS 2359 / DSM 70799 / NBRC 1267 / NRRL Y-1140 / WM37) (Yeast).